The sequence spans 105 residues: UPF0045 protein ECM15 (105 aa).

The protein belongs to the UPF0045 family.

The chain is UPF0045 protein ECM15 (ECM15) from Eremothecium gossypii (strain ATCC 10895 / CBS 109.51 / FGSC 9923 / NRRL Y-1056) (Yeast).